Consider the following 122-residue polypeptide: Large ribosomal subunit protein uL14 (122 aa).

Belongs to the universal ribosomal protein uL14 family. In terms of assembly, part of the 50S ribosomal subunit. Forms a cluster with proteins L3 and L19. In the 70S ribosome, L14 and L19 interact and together make contacts with the 16S rRNA in bridges B5 and B8.

Functionally, binds to 23S rRNA. Forms part of two intersubunit bridges in the 70S ribosome. This chain is Large ribosomal subunit protein uL14, found in Protochlamydia amoebophila (strain UWE25).